Consider the following 491-residue polypeptide: Pre-glycoprotein polyprotein GP complex (491 aa).

Residue Gly-2 is the site of N-myristoyl glycine; by host attachment. Residues 2–17 are Extracellular-facing; it reads GQIVTFFQEVPHVIEE. The chain crosses the membrane as a helical span at residues 18 to 33; the sequence is VMNIVLIALSVLAVLK. Residues 34-58 are Cytoplasmic-facing; the sequence is GLYNFATCGLVGLVTFLLLCGRSCT. Residue Cys-57 participates in Zn(2+) binding. Over 59–432 the chain is Extracellular; that stretch reads TSLYKGVYEL…QGKTPLGLVD (374 aa). N-linked (GlcNAc...) asparagine; by host glycosylation is found at Asn-79, Asn-89, Asn-99, Asn-109, Asn-119, and Asn-167. Disulfide bonds link Cys-86–Cys-231, Cys-118–Cys-155, Cys-180–Cys-212, Cys-279–Cys-292, Cys-301–Cys-310, and Cys-364–Cys-385. Asn-224 carries N-linked (GlcNAc...) asparagine; by host glycosylation. Asn-365, Asn-373, Asn-390, and Asn-395 each carry an N-linked (GlcNAc...) asparagine; by host glycan. Residues 433–453 form a helical membrane-spanning segment; the sequence is LFVFSTSFYLISIFLHLVKIP. The Cytoplasmic portion of the chain corresponds to 454-491; sequence THRHIVGKSCPKPHRLNHMGICSCGLYKQPGVPVKWKR. 6 residues coordinate Zn(2+): His-455, His-457, Cys-463, His-467, Cys-475, and Cys-477.

Belongs to the arenaviridae GPC protein family. As to quaternary structure, interacts with glycoprotein G2. Part of the GP complex (GP-C) together with glycoprotein G1 and glycoprotein G2. The GP-complex interacts with protein Z, which interacts with ribonucleocapsid; these interactions may induce virion budding. In terms of assembly, homotrimer; disulfide-linked. In pre-fusion state, G1 homotrimers bind G2 homotrimers via ionic interactions. Part of the GP complex (GP-C) together with glycoprotein G2 and the stable signal peptide. Interacts with the primary host receptor DAG1 on the cell surface; this interaction occurs at pH 8.0 but not at pH 6.0 and below. Upon virus internalization and at endosomal pH, interacts with the host lysosomal protein LAMP1; this interaction mediates G1 dissociation from GP-C and membrane fusion. The GP-complex interacts with protein Z, which interacts with ribonucleocapsid; these interactions may induce virion budding. Homotrimer. Interacts with the stable signal peptide. In pre-fusion state, G2 homotrimers bind G1 homotrimers via ionic interactions. Part of the GP complex (GP-C) together with glycoprotein G1 and the stable signal peptide. Acidification in the endosome triggers rearrangements, which ultimately leads to a 6 helix bundle formed by the two heptad repeat domains (HR1 and HR2) in post-fusion state. The GP-complex interacts with protein Z, which interacts with ribonucleocapsid; these interactions may induce virion budding. Specific enzymatic cleavages in vivo yield mature proteins. GP-C polyprotein is cleaved in the endoplasmic reticulum by the host protease MBTPS1. Only cleaved glycoprotein is incorporated into virions. Post-translationally, the SSP remains stably associated with the GP complex following cleavage by signal peptidase and plays crucial roles in the trafficking of GP through the secretory pathway. In terms of processing, myristoylation is necessary for GP2-mediated fusion activity.

The protein resides in the virion membrane. It localises to the host endoplasmic reticulum membrane. Its subcellular location is the host Golgi apparatus membrane. It is found in the host cell membrane. Functionally, functions as a cleaved signal peptide that is retained as the third component of the GP complex (GP-C). Helps to stabilize the spike complex in its native conformation. The SSP is required for efficient glycoprotein expression, post-translational maturation cleavage of G1 and G2, glycoprotein transport to the cell surface plasma membrane, formation of infectious virus particles, and acid pH-dependent glycoprotein-mediated cell fusion. Forms the virion spikes together with glycoprotein G2. The glycoprotein spike trimers are connected to the underlying matrix. Interacts with the host receptor. Mediates virus attachment to the host primary receptor alpha-dystroglycan DAG1 (alpha-DG) at the cell surface. This attachment induces virion internalization apparently through macropinocytosis. Following endocytosis, there is a pH-dependent switch from binding DAG1 to the host lysosomal receptor LAMP1. This latter binding triggers the dissociation of GP1, exposing the fusion subunit, GP2, such that fusion can occur. Down-modulates host DAG1. In terms of biological role, forms the virion spikes together with glycoprotein G1. The glycoprotein spike trimers are connected to the underlying matrix. Class I viral fusion protein that directs fusion of viral and host endosomal membranes, leading to delivery of the nucleocapsid into the cytoplasm. Membrane fusion is mediated by irreversible conformational changes induced by acidification. The sequence is that of Pre-glycoprotein polyprotein GP complex from Homo sapiens (Human).